The chain runs to 431 residues: Enolase (431 aa).

A (2R)-2-phosphoglycerate-binding site is contributed by Gln-163. Catalysis depends on Glu-205, which acts as the Proton donor. Mg(2+) contacts are provided by Asp-242, Glu-288, and Asp-315. Lys-340, Arg-369, Ser-370, and Lys-391 together coordinate (2R)-2-phosphoglycerate. Catalysis depends on Lys-340, which acts as the Proton acceptor.

It belongs to the enolase family. Mg(2+) serves as cofactor.

It is found in the cytoplasm. The protein resides in the secreted. The protein localises to the cell surface. The enzyme catalyses (2R)-2-phosphoglycerate = phosphoenolpyruvate + H2O. Its pathway is carbohydrate degradation; glycolysis; pyruvate from D-glyceraldehyde 3-phosphate: step 4/5. Catalyzes the reversible conversion of 2-phosphoglycerate (2-PG) into phosphoenolpyruvate (PEP). It is essential for the degradation of carbohydrates via glycolysis. This is Enolase from Trichlorobacter lovleyi (strain ATCC BAA-1151 / DSM 17278 / SZ) (Geobacter lovleyi).